Consider the following 400-residue polypeptide: Acetate kinase (400 aa).

A Mg(2+)-binding site is contributed by N10. Residue K17 participates in ATP binding. R91 serves as a coordination point for substrate. Residue D150 is the Proton donor/acceptor of the active site. ATP contacts are provided by residues 210 to 214 (HLGNG), 285 to 287 (DCR), and 333 to 337 (GIGEN). Residue E387 coordinates Mg(2+).

This sequence belongs to the acetokinase family. As to quaternary structure, homodimer. Requires Mg(2+) as cofactor. Mn(2+) serves as cofactor.

The protein resides in the cytoplasm. It carries out the reaction acetate + ATP = acetyl phosphate + ADP. Its pathway is metabolic intermediate biosynthesis; acetyl-CoA biosynthesis; acetyl-CoA from acetate: step 1/2. Catalyzes the formation of acetyl phosphate from acetate and ATP. Can also catalyze the reverse reaction. The sequence is that of Acetate kinase from Pectobacterium carotovorum subsp. carotovorum (strain PC1).